Reading from the N-terminus, the 278-residue chain is Trehalose/maltose transport system permease protein MalG (278 aa).

Transmembrane regions (helical) follow at residues 12–32 (IIGA…MIVV), 74–94 (IIIA…AAYA), 106–126 (IPIF…GYLF), 141–161 (LYFP…LSYF), 186–206 (IILP…FIAA), and 242–262 (GSVM…ALLF). An ABC transmembrane type-1 domain is found at 70–262 (LKNSIIIASL…IPLVIMALLF (193 aa)).

The protein belongs to the binding-protein-dependent transport system permease family. As to quaternary structure, the complex is composed of two ATP-binding proteins (MalK), two transmembrane proteins (MalG and MalF) and a solute-binding protein (MalE).

The protein localises to the cell membrane. Functionally, part of the ABC transporter complex MalEFGK involved in trehalose/maltose import. Responsible for the translocation of the substrate across the membrane. In Thermococcus litoralis (strain ATCC 51850 / DSM 5473 / JCM 8560 / NS-C), this protein is Trehalose/maltose transport system permease protein MalG (malG).